The primary structure comprises 122 residues: Large ribosomal subunit protein uL14 (122 aa).

Belongs to the universal ribosomal protein uL14 family. In terms of assembly, part of the 50S ribosomal subunit. Forms a cluster with proteins L3 and L19. In the 70S ribosome, L14 and L19 interact and together make contacts with the 16S rRNA in bridges B5 and B8.

Binds to 23S rRNA. Forms part of two intersubunit bridges in the 70S ribosome. In Nitratiruptor sp. (strain SB155-2), this protein is Large ribosomal subunit protein uL14.